The following is a 279-amino-acid chain: Sarcosine/dimethylglycine N-methyltransferase (279 aa).

This sequence belongs to the methyltransferase superfamily. Monomer.

The catalysed reaction is sarcosine + 2 S-adenosyl-L-methionine = glycine betaine + 2 S-adenosyl-L-homocysteine + 2 H(+). It catalyses the reaction sarcosine + S-adenosyl-L-methionine = N,N-dimethylglycine + S-adenosyl-L-homocysteine + H(+). The enzyme catalyses N,N-dimethylglycine + S-adenosyl-L-methionine = glycine betaine + S-adenosyl-L-homocysteine + H(+). Its pathway is amine and polyamine biosynthesis; betaine biosynthesis via glycine pathway; betaine from glycine: step 2/3. It functions in the pathway amine and polyamine biosynthesis; betaine biosynthesis via glycine pathway; betaine from glycine: step 3/3. With respect to regulation, p-chloromercuribenzoate acid inhibits 23% of the SDMT activities on sarcosine and dimethylglycine, and S-adenosylhomocysteine (AdoHcy) inhibits completely GSMT activities. In terms of biological role, catalyzes the methylation of sarcosine and dimethylglycine to dimethylglycine and betaine, respectively, with S-adenosylmethionine (AdoMet) acting as the methyl donor. It has strict specificity for sarcosine and dimethylglycine as the methyl group acceptors. The sequence is that of Sarcosine/dimethylglycine N-methyltransferase from Halorhodospira halochloris (Ectothiorhodospira halochloris).